The chain runs to 490 residues: ATP synthase subunit beta, chloroplastic (490 aa).

170–177 (GGAGVGKT) is a binding site for ATP.

This sequence belongs to the ATPase alpha/beta chains family. F-type ATPases have 2 components, CF(1) - the catalytic core - and CF(0) - the membrane proton channel. CF(1) has five subunits: alpha(3), beta(3), gamma(1), delta(1), epsilon(1). CF(0) has four main subunits: a(1), b(1), b'(1) and c(9-12).

Its subcellular location is the plastid. The protein resides in the chloroplast thylakoid membrane. The catalysed reaction is ATP + H2O + 4 H(+)(in) = ADP + phosphate + 5 H(+)(out). Its function is as follows. Produces ATP from ADP in the presence of a proton gradient across the membrane. The catalytic sites are hosted primarily by the beta subunits. This chain is ATP synthase subunit beta, chloroplastic, found in Cressa truxillensis (Spreading alkaliweed).